The following is a 394-amino-acid chain: S-adenosylmethionine synthase (394 aa).

An ATP-binding site is contributed by His-18. Mg(2+) is bound at residue Asp-20. Glu-46 serves as a coordination point for K(+). Residues Glu-59 and Gln-102 each coordinate L-methionine. Residues 102-112 (QSPDIDMGVSA) are flexible loop. ATP contacts are provided by residues 175–177 (DGK), Asp-250, 256–257 (RK), Ala-273, and Lys-277. Asp-250 lines the L-methionine pocket. An L-methionine-binding site is contributed by Lys-281.

It belongs to the AdoMet synthase family. Homotetramer; dimer of dimers. Mg(2+) is required as a cofactor. It depends on K(+) as a cofactor.

It is found in the cytoplasm. The catalysed reaction is L-methionine + ATP + H2O = S-adenosyl-L-methionine + phosphate + diphosphate. The protein operates within amino-acid biosynthesis; S-adenosyl-L-methionine biosynthesis; S-adenosyl-L-methionine from L-methionine: step 1/1. Its function is as follows. Catalyzes the formation of S-adenosylmethionine (AdoMet) from methionine and ATP. The overall synthetic reaction is composed of two sequential steps, AdoMet formation and the subsequent tripolyphosphate hydrolysis which occurs prior to release of AdoMet from the enzyme. In Brachyspira hyodysenteriae (strain ATCC 49526 / WA1), this protein is S-adenosylmethionine synthase.